A 433-amino-acid chain; its full sequence is Cysteine--tRNA ligase (433 aa).

C4 is a Zn(2+) binding site. Positions 6–16 match the 'HIGH' region motif; it reads PTVYDTAHIGN. The Zn(2+) site is built by C188, H213, and E217. Residues 246–250 carry the 'KMSKS' region motif; that stretch reads KMSKS. Residue K249 coordinates ATP.

Belongs to the class-I aminoacyl-tRNA synthetase family. In terms of assembly, monomer. Zn(2+) is required as a cofactor.

The protein resides in the cytoplasm. It catalyses the reaction tRNA(Cys) + L-cysteine + ATP = L-cysteinyl-tRNA(Cys) + AMP + diphosphate. This chain is Cysteine--tRNA ligase, found in Wolbachia sp. subsp. Brugia malayi (strain TRS).